Reading from the N-terminus, the 96-residue chain is MPAIEIGRICVKTAGREAGRKCIIVDIIDDNFVLVTGPKSLTGVKRRKVNIKHLEPTDKSIKIPRGASDEEVLKAIGENGLTDYMVEHVKPKLTPI.

This sequence belongs to the eukaryotic ribosomal protein eL14 family.

In Desulfurococcus amylolyticus (strain DSM 18924 / JCM 16383 / VKM B-2413 / 1221n) (Desulfurococcus kamchatkensis), this protein is Large ribosomal subunit protein eL14.